Consider the following 307-residue polypeptide: UDP-N-acetylenolpyruvoylglucosamine reductase (307 aa).

The FAD-binding PCMH-type domain maps to 33–197; sequence TGGNADFYIT…LEAAFTLAPG (165 aa). Arginine 176 is a catalytic residue. The active-site Proton donor is the serine 226. Residue glutamate 296 is part of the active site.

This sequence belongs to the MurB family. The cofactor is FAD.

The protein localises to the cytoplasm. It catalyses the reaction UDP-N-acetyl-alpha-D-muramate + NADP(+) = UDP-N-acetyl-3-O-(1-carboxyvinyl)-alpha-D-glucosamine + NADPH + H(+). It functions in the pathway cell wall biogenesis; peptidoglycan biosynthesis. Cell wall formation. This Staphylococcus aureus (strain NCTC 8325 / PS 47) protein is UDP-N-acetylenolpyruvoylglucosamine reductase.